Reading from the N-terminus, the 333-residue chain is MSKIIKIAVDAMGGDNSPKKIIDGINHHYKSNTNTFYQIFGDKEKIQNYINQLPTSSFEIIHTKDLVKGTDSPLEGAKRGKNTSMWLAIQSVKEKKSDIVISAGNTGALLVISKLNLKMIENIDKPALSALWPNKKNMSVVLDLGANIECSPKNLIDFSIMGSSLFKSLYPDDTAKVALLNIGSEEIKGNETIKETYQQLNQRNNTDFEFKGYIEGNQLMNGDVNVIVADGFTGNIALKTAEGTANFITSELKKAMTGNIVGKISSLLNISNLKKFKERLDPRLYNGAIFIGLDSPVIKSHGGTDYIGFSNSLSVCTRIVTGNLIEKIRNNIC.

Belongs to the PlsX family. Homodimer. Probably interacts with PlsY.

The protein resides in the cytoplasm. The catalysed reaction is a fatty acyl-[ACP] + phosphate = an acyl phosphate + holo-[ACP]. It functions in the pathway lipid metabolism; phospholipid metabolism. Functionally, catalyzes the reversible formation of acyl-phosphate (acyl-PO(4)) from acyl-[acyl-carrier-protein] (acyl-ACP). This enzyme utilizes acyl-ACP as fatty acyl donor, but not acyl-CoA. In Pelagibacter ubique (strain HTCC1062), this protein is Phosphate acyltransferase.